Consider the following 435-residue polypeptide: UPF0761 membrane protein mma_2179 (435 aa).

Transmembrane regions (helical) follow at residues 45-65, 103-123, 142-162, 177-197, 208-228, and 252-272; these read VLALVPILTIALAIFTTFPLF, LSAFGAVALIVTAVAMMLMID, ILVYWAIVTLGPLLIGASMTF, VPFVGAVFYTSISILLSMVAF, LVEWRDAVVGGLLAAIAFEIV, and FPIFLVWVYLGWLITLAGAVV.

The protein belongs to the UPF0761 family.

It localises to the cell inner membrane. The chain is UPF0761 membrane protein mma_2179 from Janthinobacterium sp. (strain Marseille) (Minibacterium massiliensis).